A 129-amino-acid chain; its full sequence is uncharacterized protein (129 aa).

It localises to the cytoplasm. Its subcellular location is the cytosol. The protein resides in the nucleus. This is an uncharacterized protein from Schizosaccharomyces pombe (strain 972 / ATCC 24843) (Fission yeast).